We begin with the raw amino-acid sequence, 70 residues long: Small, acid-soluble spore protein 1 (70 aa).

This sequence belongs to the alpha/beta-type SASP family.

Its function is as follows. SASP are bound to spore DNA. They are double-stranded DNA-binding proteins that cause DNA to change to an a-like conformation. They protect the DNA backbone from chemical and enzymatic cleavage and are thus involved in dormant spore's high resistance to UV light. The chain is Small, acid-soluble spore protein 1 from Bacillus subtilis.